Consider the following 157-residue polypeptide: DNA-binding protein MNB1B (157 aa).

Disordered regions lie at residues 1–45 (MKGA…KRAP), 59–87 (FKEKNPKNKSVAAVGKAAGDRWKSLSESD), and 109–157 (YNKG…DDDE). Composition is skewed to basic and acidic residues over residues 10-27 (AKADAKLAVKSKGAEKPA) and 76-87 (AGDRWKSLSESD). The HMG box DNA-binding region spans 41–110 (PKRAPSAFFV…EYNKAIAAYN (70 aa)). Composition is skewed to acidic residues over residues 124–133 (EEEEEDEEES) and 141–157 (NDEDDEEGSEEDEDDDE). Residue Ser149 is modified to Phosphoserine; by CK2.

Expressed in all tissues examined.

The protein localises to the nucleus. Functionally, recognizes an AAGG motif at the MNF1-binding site. This chain is DNA-binding protein MNB1B (MNB1B), found in Zea mays (Maize).